Here is a 323-residue protein sequence, read N- to C-terminus: NADH-ubiquinone oxidoreductase chain 1 (323 aa).

The next 8 membrane-spanning stretches (helical) occupy residues 8 to 28 (LINPLLYMIPILLAVAFLTLI), 75 to 95 (MFLIAPTMALALAMSIWAPLP), 105 to 125 (LGILFILALSSLAVYTILGSG), 151 to 171 (LGLILLCMIMLAGGFTYTTLM), 177 to 197 (MWLIIPGWPMAAMWYISTLAE), 234 to 254 (ANILMMNTLSYLILFLGSSFM), 258 to 278 (ELTTISLMIKSSILSMIFLWV), and 298 to 318 (FLPITLAMTLWHISLPISMLG).

The protein belongs to the complex I subunit 1 family. Core subunit of respiratory chain NADH dehydrogenase (Complex I) which is composed of 45 different subunits.

The protein localises to the mitochondrion inner membrane. The enzyme catalyses a ubiquinone + NADH + 5 H(+)(in) = a ubiquinol + NAD(+) + 4 H(+)(out). Functionally, core subunit of the mitochondrial membrane respiratory chain NADH dehydrogenase (Complex I) which catalyzes electron transfer from NADH through the respiratory chain, using ubiquinone as an electron acceptor. Essential for the catalytic activity and assembly of complex I. This Xenopus laevis (African clawed frog) protein is NADH-ubiquinone oxidoreductase chain 1 (mt-nd1).